The chain runs to 104 residues: V-type ATP synthase subunit F (104 aa).

Belongs to the V-ATPase F subunit family.

In terms of biological role, produces ATP from ADP in the presence of a proton gradient across the membrane. The chain is V-type ATP synthase subunit F (atpF) from Thermus thermophilus (strain ATCC 27634 / DSM 579 / HB8).